The sequence spans 783 residues: Probable galactinol--sucrose galactosyltransferase 5 (783 aa).

Phosphoserine occurs at positions 9 and 11.

It belongs to the glycosyl hydrolases 36 family.

The catalysed reaction is alpha-D-galactosyl-(1-&gt;3)-1D-myo-inositol + sucrose = raffinose + myo-inositol. Transglycosidase operating by a ping-pong reaction mechanism. Involved in the synthesis of raffinose, a major soluble carbohydrate in seeds, roots and tubers. The sequence is that of Probable galactinol--sucrose galactosyltransferase 5 (RFS5) from Arabidopsis thaliana (Mouse-ear cress).